A 282-amino-acid polypeptide reads, in one-letter code: MLLAIPSKGRLLDPTLKLLEAIGMRLLASDERALVVPTSWRDVNVIRARPEDIPYIVESGKVWAGVTGHDYVVESGASVVEALELGFGRGRLVVAVPKSSGIKTVDELPPGTRVATKFVNIAYNYFAELGKRVRVVRVTGSVEILPQLGIADAILDVMATGTTLEVHGLVPIATVLETSARLIVHPSYVNHELTKKLTTFIQGYYAAQGKKMIFLNVPASRLEKVLAVLPAMEAPSVTPLAKGDVYEVFSVVPEDELPDIVIRLKEAGAKDIVVTPIEKLIS.

This sequence belongs to the ATP phosphoribosyltransferase family. Long subfamily. The cofactor is Mg(2+).

Its subcellular location is the cytoplasm. It carries out the reaction 1-(5-phospho-beta-D-ribosyl)-ATP + diphosphate = 5-phospho-alpha-D-ribose 1-diphosphate + ATP. The protein operates within amino-acid biosynthesis; L-histidine biosynthesis; L-histidine from 5-phospho-alpha-D-ribose 1-diphosphate: step 1/9. Feedback inhibited by histidine. Catalyzes the condensation of ATP and 5-phosphoribose 1-diphosphate to form N'-(5'-phosphoribosyl)-ATP (PR-ATP). Has a crucial role in the pathway because the rate of histidine biosynthesis seems to be controlled primarily by regulation of HisG enzymatic activity. This is ATP phosphoribosyltransferase from Pyrobaculum calidifontis (strain DSM 21063 / JCM 11548 / VA1).